A 72-amino-acid chain; its full sequence is Translation initiation factor IF-1 (72 aa).

The 72-residue stretch at 1–72 folds into the S1-like domain; that stretch reads MAKEDCIEME…TKGRIKFRSK (72 aa).

It belongs to the IF-1 family. Component of the 30S ribosomal translation pre-initiation complex which assembles on the 30S ribosome in the order IF-2 and IF-3, IF-1 and N-formylmethionyl-tRNA(fMet); mRNA recruitment can occur at any time during PIC assembly.

The protein localises to the cytoplasm. In terms of biological role, one of the essential components for the initiation of protein synthesis. Stabilizes the binding of IF-2 and IF-3 on the 30S subunit to which N-formylmethionyl-tRNA(fMet) subsequently binds. Helps modulate mRNA selection, yielding the 30S pre-initiation complex (PIC). Upon addition of the 50S ribosomal subunit IF-1, IF-2 and IF-3 are released leaving the mature 70S translation initiation complex. The sequence is that of Translation initiation factor IF-1 from Francisella tularensis subsp. novicida (strain U112).